Consider the following 89-residue polypeptide: Small ribosomal subunit protein uS15 (89 aa).

Belongs to the universal ribosomal protein uS15 family. Part of the 30S ribosomal subunit. Forms a bridge to the 50S subunit in the 70S ribosome, contacting the 23S rRNA.

In terms of biological role, one of the primary rRNA binding proteins, it binds directly to 16S rRNA where it helps nucleate assembly of the platform of the 30S subunit by binding and bridging several RNA helices of the 16S rRNA. Forms an intersubunit bridge (bridge B4) with the 23S rRNA of the 50S subunit in the ribosome. This Acidiphilium cryptum (strain JF-5) protein is Small ribosomal subunit protein uS15.